A 155-amino-acid chain; its full sequence is 6,7-dimethyl-8-ribityllumazine synthase (155 aa).

5-amino-6-(D-ribitylamino)uracil-binding positions include tryptophan 18, 52–54 (AFE), and 76–78 (LVV). Catalysis depends on arginine 84, which acts as the Proton donor. Residue serine 109 participates in 5-amino-6-(D-ribitylamino)uracil binding. Histidine 123 provides a ligand contact to (2S)-2-hydroxy-3-oxobutyl phosphate.

Belongs to the DMRL synthase family.

It catalyses the reaction (2S)-2-hydroxy-3-oxobutyl phosphate + 5-amino-6-(D-ribitylamino)uracil = 6,7-dimethyl-8-(1-D-ribityl)lumazine + phosphate + 2 H2O + H(+). The protein operates within cofactor biosynthesis; riboflavin biosynthesis; riboflavin from 2-hydroxy-3-oxobutyl phosphate and 5-amino-6-(D-ribitylamino)uracil: step 1/2. Its function is as follows. Catalyzes the formation of 6,7-dimethyl-8-ribityllumazine by condensation of 5-amino-6-(D-ribitylamino)uracil with 3,4-dihydroxy-2-butanone 4-phosphate. This is the penultimate step in the biosynthesis of riboflavin. This chain is 6,7-dimethyl-8-ribityllumazine synthase, found in Rhodococcus erythropolis (Arthrobacter picolinophilus).